The following is a 435-amino-acid chain: 5-methylthioadenosine/S-adenosylhomocysteine deaminase (435 aa).

Zn(2+) contacts are provided by His65 and His67. Residues Glu94, Arg150, and His189 each contribute to the substrate site. His216 provides a ligand contact to Zn(2+). The substrate site is built by Glu219 and Asp304. Asp304 contributes to the Zn(2+) binding site.

It belongs to the metallo-dependent hydrolases superfamily. MTA/SAH deaminase family. Zn(2+) is required as a cofactor.

The catalysed reaction is S-adenosyl-L-homocysteine + H2O + H(+) = S-inosyl-L-homocysteine + NH4(+). It carries out the reaction S-methyl-5'-thioadenosine + H2O + H(+) = S-methyl-5'-thioinosine + NH4(+). Functionally, catalyzes the deamination of 5-methylthioadenosine and S-adenosyl-L-homocysteine into 5-methylthioinosine and S-inosyl-L-homocysteine, respectively. Is also able to deaminate adenosine. The chain is 5-methylthioadenosine/S-adenosylhomocysteine deaminase from Bacillus cereus (strain AH187).